Consider the following 204-residue polypeptide: Large ribosomal subunit protein uL18 (204 aa).

Belongs to the universal ribosomal protein uL18 family. As to quaternary structure, part of the 50S ribosomal subunit. Contacts the 5S and 23S rRNAs.

This is one of the proteins that bind and probably mediate the attachment of the 5S RNA into the large ribosomal subunit, where it forms part of the central protuberance. The protein is Large ribosomal subunit protein uL18 of Ignicoccus hospitalis (strain KIN4/I / DSM 18386 / JCM 14125).